A 139-amino-acid chain; its full sequence is Sec-independent protein translocase protein TatB (139 aa).

A helical transmembrane segment spans residues 1–21; that stretch reads MFDIGFTELLLVGLVALMVLG. A disordered region spans residues 69 to 139; the sequence is LDLEREMKQS…PLRSDRPSEP (71 aa). Residues 80 to 95 show a composition bias toward pro residues; the sequence is MPPPASNPAATPPSPP.

Belongs to the TatB family. As to quaternary structure, the Tat system comprises two distinct complexes: a TatABC complex, containing multiple copies of TatA, TatB and TatC subunits, and a separate TatA complex, containing only TatA subunits. Substrates initially bind to the TatABC complex, which probably triggers association of the separate TatA complex to form the active translocon.

The protein resides in the cell inner membrane. In terms of biological role, part of the twin-arginine translocation (Tat) system that transports large folded proteins containing a characteristic twin-arginine motif in their signal peptide across membranes. Together with TatC, TatB is part of a receptor directly interacting with Tat signal peptides. TatB may form an oligomeric binding site that transiently accommodates folded Tat precursor proteins before their translocation. This chain is Sec-independent protein translocase protein TatB, found in Stutzerimonas stutzeri (strain A1501) (Pseudomonas stutzeri).